Here is a 216-residue protein sequence, read N- to C-terminus: MKSIHWPLAGVAALLLSMQAQAADGQKIYTQGGANPAAMACATCHGADAMGMAAAGFPRLAGIDAGYSRKQLDDFRSGARSNPIMQPIAAALSDEEMDAVAATLEAMPAPDFAAIGRSEAAEGVGARLALRGAWERNIPECVACHGPAGMGVGASFPPLAGQSAQYLGAQLNAWRQGTRKNDPNDLMGHIARAMSDDEVQAVAEYFANVGQKETGQ.

The signal sequence occupies residues 1–22 (MKSIHWPLAGVAALLLSMQAQA). Cytochrome c domains are found at residues 23–108 (ADGQ…EAMP) and 118–210 (SEAA…ANVG). Heme c contacts are provided by C41, C44, H45, C141, C144, and H145.

In terms of processing, binds 2 heme c groups covalently per subunit.

Acts as an electron acceptor for the thiosulfate dehydrogenase TsdA. The polypeptide is Thiosulfate dehydrogenase electron acceptor (tsdB) (Stutzerimonas stutzeri (strain A1501) (Pseudomonas stutzeri)).